A 1382-amino-acid polypeptide reads, in one-letter code: DNA-directed RNA polymerase subunit beta (1382 aa).

It belongs to the RNA polymerase beta chain family. The RNAP catalytic core consists of 2 alpha, 1 beta, 1 beta' and 1 omega subunit. When a sigma factor is associated with the core the holoenzyme is formed, which can initiate transcription.

It catalyses the reaction RNA(n) + a ribonucleoside 5'-triphosphate = RNA(n+1) + diphosphate. Functionally, DNA-dependent RNA polymerase catalyzes the transcription of DNA into RNA using the four ribonucleoside triphosphates as substrates. In Aliarcobacter butzleri (strain RM4018) (Arcobacter butzleri), this protein is DNA-directed RNA polymerase subunit beta.